The primary structure comprises 35 residues: Dermonecrotic toxin LrSicTox-alphaI-1 (35 aa).

Histidine 11 is an active-site residue. Aspartate 33 is a Mg(2+) binding site.

This sequence belongs to the arthropod phospholipase D family. Class II subfamily. It depends on Mg(2+) as a cofactor. In terms of processing, contains 2 disulfide bonds. As to expression, expressed by the venom gland.

The protein localises to the secreted. The enzyme catalyses an N-(acyl)-sphingosylphosphocholine = an N-(acyl)-sphingosyl-1,3-cyclic phosphate + choline. The catalysed reaction is an N-(acyl)-sphingosylphosphoethanolamine = an N-(acyl)-sphingosyl-1,3-cyclic phosphate + ethanolamine. It carries out the reaction a 1-acyl-sn-glycero-3-phosphocholine = a 1-acyl-sn-glycero-2,3-cyclic phosphate + choline. It catalyses the reaction a 1-acyl-sn-glycero-3-phosphoethanolamine = a 1-acyl-sn-glycero-2,3-cyclic phosphate + ethanolamine. In terms of biological role, dermonecrotic toxins cleave the phosphodiester linkage between the phosphate and headgroup of certain phospholipids (sphingolipid and lysolipid substrates), forming an alcohol (often choline) and a cyclic phosphate. This toxin acts on sphingomyelin (SM). It may also act on ceramide phosphoethanolamine (CPE), lysophosphatidylcholine (LPC) and lysophosphatidylethanolamine (LPE), but not on lysophosphatidylserine (LPS), and lysophosphatidylglycerol (LPG). It acts by transphosphatidylation, releasing exclusively cyclic phosphate products as second products. Induces dermonecrosis, hemolysis, increased vascular permeability, edema, inflammatory response, and platelet aggregation. The sequence is that of Dermonecrotic toxin LrSicTox-alphaI-1 from Loxosceles reclusa (Brown recluse spider).